A 270-amino-acid chain; its full sequence is MENPVIIYVISDAIGETAQHIIRAVTAQFSLNKPADIRRHAFIRDENALLETLEEAKAADGIVVQTLVQSKLADYASNFCVKNHLQNVDLLHTLTAAVEAKTGLKSKQDPGNMRRLDSNYFDRIAAIEFAVKYDDCKDPRGLLDADIVLVGVSRTSKTPLSSYLANQNWKVANVPLVPEIPIPDELFQIPAERIIGLTTTPEKLAQIRKVRLKSIGLDEASSYSSEKRILEELEYGYATFKKLGCQVIHVEDKAIEETAALITEIITSYH.

An ADP-binding site is contributed by 151-158 (GVSRTSKT).

Belongs to the pyruvate, phosphate/water dikinase regulatory protein family. PDRP subfamily.

The enzyme catalyses N(tele)-phospho-L-histidyl/L-threonyl-[pyruvate, phosphate dikinase] + ADP = N(tele)-phospho-L-histidyl/O-phospho-L-threonyl-[pyruvate, phosphate dikinase] + AMP + H(+). It carries out the reaction N(tele)-phospho-L-histidyl/O-phospho-L-threonyl-[pyruvate, phosphate dikinase] + phosphate + H(+) = N(tele)-phospho-L-histidyl/L-threonyl-[pyruvate, phosphate dikinase] + diphosphate. Bifunctional serine/threonine kinase and phosphorylase involved in the regulation of the pyruvate, phosphate dikinase (PPDK) by catalyzing its phosphorylation/dephosphorylation. The chain is Putative pyruvate, phosphate dikinase regulatory protein 2 from Listeria innocua serovar 6a (strain ATCC BAA-680 / CLIP 11262).